The primary structure comprises 310 residues: Tryptophan 2,3-dioxygenase (310 aa).

The disordered stretch occupies residues 1–36 (MQPPGEDAPAGCPFSGARAAHSAPAAPAAHEASHVP). Positions 15–36 (SGARAAHSAPAAPAAHEASHVP) are enriched in low complexity. Substrate contacts are provided by residues 79–83 (FIIQH), Y141, and R145. H268 is a heme binding site. T282 lines the substrate pocket.

The protein belongs to the tryptophan 2,3-dioxygenase family. As to quaternary structure, homotetramer. It depends on heme as a cofactor.

It catalyses the reaction L-tryptophan + O2 = N-formyl-L-kynurenine. Its pathway is amino-acid degradation; L-tryptophan degradation via kynurenine pathway; L-kynurenine from L-tryptophan: step 1/2. Heme-dependent dioxygenase that catalyzes the oxidative cleavage of the L-tryptophan (L-Trp) pyrrole ring and converts L-tryptophan to N-formyl-L-kynurenine. Catalyzes the oxidative cleavage of the indole moiety. This Burkholderia lata (strain ATCC 17760 / DSM 23089 / LMG 22485 / NCIMB 9086 / R18194 / 383) protein is Tryptophan 2,3-dioxygenase.